The chain runs to 184 residues: MSEVIVEMSGRMAKSVEAFKNDLSRVRTGRASISILDDITVVAYGSTMPLNQVATLTIPESRMIALQPWDPQMIPPIEKAILKSGLGLNPVNDGKVVRLNIPQLTEDRRKDLVKQVKKIAEEFRVAIRNVRRDAIDTLKLQKKDKEISEDDLFKLQDDAQKETDIYIKQLDEVSASKEKEVMEV.

This sequence belongs to the RRF family.

The protein resides in the cytoplasm. Responsible for the release of ribosomes from messenger RNA at the termination of protein biosynthesis. May increase the efficiency of translation by recycling ribosomes from one round of translation to another. The protein is Ribosome-recycling factor of Desulfotalea psychrophila (strain LSv54 / DSM 12343).